The primary structure comprises 263 residues: tRNA (guanine-N(1)-)-methyltransferase (263 aa).

S-adenosyl-L-methionine contacts are provided by residues Gly-124 and Leu-144–Leu-149.

The protein belongs to the RNA methyltransferase TrmD family. Homodimer.

Its subcellular location is the cytoplasm. The catalysed reaction is guanosine(37) in tRNA + S-adenosyl-L-methionine = N(1)-methylguanosine(37) in tRNA + S-adenosyl-L-homocysteine + H(+). Its function is as follows. Specifically methylates guanosine-37 in various tRNAs. In Aromatoleum aromaticum (strain DSM 19018 / LMG 30748 / EbN1) (Azoarcus sp. (strain EbN1)), this protein is tRNA (guanine-N(1)-)-methyltransferase.